Consider the following 394-residue polypeptide: Mitogen-activated protein kinase homolog D5 (394 aa).

One can recognise a Protein kinase domain in the interval 62 to 347 (RPPIMPIGKG…VENALAHPYL (286 aa)). Residues 68–76 (IGKGAYGIV) and lysine 91 each bind ATP. Catalysis depends on aspartate 188, which acts as the Proton acceptor. Threonine 220 carries the phosphothreonine modification. The short motif at 220-222 (TEY) is the TXY element. Tyrosine 222 carries the phosphotyrosine modification.

The protein belongs to the protein kinase superfamily. CMGC Ser/Thr protein kinase family. MAP kinase subfamily. Mg(2+) serves as cofactor. Post-translationally, dually phosphorylated on Thr-220 and Tyr-222, which activates the enzyme. As to expression, leaves, roots, root apices, and dormant and growing axillary buds.

The catalysed reaction is L-seryl-[protein] + ATP = O-phospho-L-seryl-[protein] + ADP + H(+). The enzyme catalyses L-threonyl-[protein] + ATP = O-phospho-L-threonyl-[protein] + ADP + H(+). Its activity is regulated as follows. Activated by tyrosine and threonine phosphorylation. The protein is Mitogen-activated protein kinase homolog D5 of Pisum sativum (Garden pea).